The primary structure comprises 143 residues: SKSSTETPLSYNQLNYKENLQRFFNSKPVTAPTQLDPVNRDSSYASTSREDACSAISPDHGGECSGGSGSSGNCTTNSNIRMSSFTNTSITGTGTSGCGNSGGKLSESGPVEVGGAAADAGPSLAADNSIPPISVTLTESLLN.

The disordered stretch occupies residues 25-130 (NSKPVTAPTQ…GPSLAADNSI (106 aa)). Low complexity-rich tracts occupy residues 71 to 93 (SGNCTTNSNIRMSSFTNTSITGT) and 114 to 126 (GGAAADAGPSLAA).

In terms of assembly, forms a heterodimer with timeless (TIM); the complex then translocates into the nucleus. Phosphorylated with a circadian rhythmicity, probably by the double-time protein (dbt). Phosphorylation could be implicated in the stability of per monomer and in the formation of heterodimer per-tim.

Its subcellular location is the nucleus. The protein resides in the cytoplasm. The protein localises to the perinuclear region. Functionally, essential for biological clock functions. Determines the period length of circadian and ultradian rhythms; an increase in PER dosage leads to shortened circadian rhythms and a decrease leads to lengthened circadian rhythms. Essential for the circadian rhythmicity of locomotor activity, eclosion behavior, and for the rhythmic component of the male courtship song that originates in the thoracic nervous system. The biological cycle depends on the rhythmic formation and nuclear localization of the TIM-PER complex. Light induces the degradation of TIM, which promotes elimination of PER. Nuclear activity of the heterodimer coordinatively regulates PER and TIM transcription through a negative feedback loop. Behaves as a negative element in circadian transcriptional loop. Does not appear to bind DNA, suggesting indirect transcriptional inhibition. The sequence is that of Period circadian protein (per) from Drosophila picticornis (Fruit fly).